The sequence spans 129 residues: Glycine cleavage system H protein (129 aa).

One can recognise a Lipoyl-binding domain in the interval 24-106; sequence EAVVGITEHA…YGAGWLFRIK (83 aa). Lysine 65 is modified (N6-lipoyllysine).

It belongs to the GcvH family. As to quaternary structure, the glycine cleavage system is composed of four proteins: P, T, L and H. (R)-lipoate is required as a cofactor.

The glycine cleavage system catalyzes the degradation of glycine. The H protein shuttles the methylamine group of glycine from the P protein to the T protein. The polypeptide is Glycine cleavage system H protein (Aeromonas salmonicida (strain A449)).